The primary structure comprises 467 residues: Chromosomal replication initiator protein DnaA (467 aa).

The domain I, interacts with DnaA modulators stretch occupies residues 1 to 90; it reads MSLSLWQQCL…KPVTQTPQAA (90 aa). The tract at residues 91 to 130 is domain II; it reads VTSNVAAPAQVAQTQPQRAAPSMRSGWDNVPAPAEPTYRS. A domain III, AAA+ region region spans residues 131–347; the sequence is NVNVKHTFDN…GALNRVIANA (217 aa). Residues Gly175, Gly177, Lys178, and Thr179 each contribute to the ATP site. Positions 348 to 467 are domain IV, binds dsDNA; that stretch reads NFTGRAITID…FSNLIRTLSS (120 aa).

This sequence belongs to the DnaA family. Oligomerizes as a right-handed, spiral filament on DNA at oriC.

Its subcellular location is the cytoplasm. Its function is as follows. Plays an essential role in the initiation and regulation of chromosomal replication. ATP-DnaA binds to the origin of replication (oriC) to initiate formation of the DNA replication initiation complex once per cell cycle. Binds the DnaA box (a 9 base pair repeat at the origin) and separates the double-stranded (ds)DNA. Forms a right-handed helical filament on oriC DNA; dsDNA binds to the exterior of the filament while single-stranded (ss)DNA is stabiized in the filament's interior. The ATP-DnaA-oriC complex binds and stabilizes one strand of the AT-rich DNA unwinding element (DUE), permitting loading of DNA polymerase. After initiation quickly degrades to an ADP-DnaA complex that is not apt for DNA replication. Binds acidic phospholipids. This chain is Chromosomal replication initiator protein DnaA, found in Escherichia coli (strain ATCC 8739 / DSM 1576 / NBRC 3972 / NCIMB 8545 / WDCM 00012 / Crooks).